A 174-amino-acid polypeptide reads, in one-letter code: ATP-dependent protease subunit HslV (174 aa).

Threonine 2 is a catalytic residue. Glycine 157, cysteine 160, and threonine 163 together coordinate Na(+).

Belongs to the peptidase T1B family. HslV subfamily. A double ring-shaped homohexamer of HslV is capped on each side by a ring-shaped HslU homohexamer. The assembly of the HslU/HslV complex is dependent on binding of ATP.

It localises to the cytoplasm. It carries out the reaction ATP-dependent cleavage of peptide bonds with broad specificity.. Its activity is regulated as follows. Allosterically activated by HslU binding. Its function is as follows. Protease subunit of a proteasome-like degradation complex believed to be a general protein degrading machinery. This Shewanella denitrificans (strain OS217 / ATCC BAA-1090 / DSM 15013) protein is ATP-dependent protease subunit HslV.